The primary structure comprises 337 residues: Arylacetonitrilase (337 aa).

The CN hydrolase domain occupies 7–278 (VRVAVTQHEP…EGFVYADLDL (272 aa)). Glu-47 (proton acceptor) is an active-site residue. The active site involves Lys-127. Catalysis depends on Cys-162, which acts as the Nucleophile. The disordered stretch occupies residues 311–337 (QHRPEGQADNAAYGLDVPSGLVEEEGA).

This sequence belongs to the carbon-nitrogen hydrolase superfamily. Nitrilase family.

The catalysed reaction is a nitrile + 2 H2O = a carboxylate + NH4(+). The enzyme catalyses 4-chlorophenylacetonitrile + 2 H2O = 4-chlorophenylacetate + NH4(+). Its function is as follows. Nitrilase that hydrolyzes preferentially phenylacetonitrile, but also (R,S)-mandelonitrile, and 2-phenylpropionitrile. The chain is Arylacetonitrilase from Aspergillus niger (strain ATCC MYA-4892 / CBS 513.88 / FGSC A1513).